Reading from the N-terminus, the 81-residue chain is Photosystem I iron-sulfur center (81 aa).

2 consecutive 4Fe-4S ferredoxin-type domains span residues 2–31 (SHSVKVYDTCIGCTQCVRACPCDVLEMVSW) and 39–68 (IASAPRTEDCIGCKRCETACPTDFLSVRVY). Cys-11, Cys-14, Cys-17, Cys-21, Cys-48, Cys-51, Cys-54, and Cys-58 together coordinate [4Fe-4S] cluster.

As to quaternary structure, the eukaryotic PSI reaction center is composed of at least 11 subunits. [4Fe-4S] cluster is required as a cofactor.

It localises to the plastid. It is found in the chloroplast thylakoid membrane. The enzyme catalyses reduced [plastocyanin] + hnu + oxidized [2Fe-2S]-[ferredoxin] = oxidized [plastocyanin] + reduced [2Fe-2S]-[ferredoxin]. In terms of biological role, apoprotein for the two 4Fe-4S centers FA and FB of photosystem I (PSI); essential for photochemical activity. FB is the terminal electron acceptor of PSI, donating electrons to ferredoxin. The C-terminus interacts with PsaA/B/D and helps assemble the protein into the PSI complex. Required for binding of PsaD and PsaE to PSI. PSI is a plastocyanin/cytochrome c6-ferredoxin oxidoreductase, converting photonic excitation into a charge separation, which transfers an electron from the donor P700 chlorophyll pair to the spectroscopically characterized acceptors A0, A1, FX, FA and FB in turn. The sequence is that of Photosystem I iron-sulfur center from Rhodomonas salina (Cryptomonas salina).